The sequence spans 376 residues: Flagellar P-ring protein (376 aa).

The first 29 residues, 1–29, serve as a signal peptide directing secretion; it reads MTQRPFSLLSHLGRICLAAAMLAALPAQA.

It belongs to the FlgI family. The basal body constitutes a major portion of the flagellar organelle and consists of four rings (L,P,S, and M) mounted on a central rod.

The protein resides in the periplasm. Its subcellular location is the bacterial flagellum basal body. Assembles around the rod to form the L-ring and probably protects the motor/basal body from shearing forces during rotation. This Bordetella avium (strain 197N) protein is Flagellar P-ring protein.